A 521-amino-acid chain; its full sequence is Ribonuclease Y (521 aa).

A helical transmembrane segment spans residues 5 to 25; sequence LLLILTAVIMLIVGFAVGAIL. The interval 77–107 is disordered; the sequence is ELKDRRGEVQKQENRLIQREETMDRKDATLD. A KH domain is found at 211–271; it reads TVTVVTLPND…IRREIARMTL (61 aa). Residues 337–430 form the HD domain; the sequence is VLNHSIEVAK…VAASDAISAA (94 aa).

Belongs to the RNase Y family.

It localises to the cell membrane. Functionally, endoribonuclease that initiates mRNA decay. The chain is Ribonuclease Y from Latilactobacillus sakei subsp. sakei (strain 23K) (Lactobacillus sakei subsp. sakei).